We begin with the raw amino-acid sequence, 121 residues long: Large ribosomal subunit protein uL3 (121 aa).

Q62 is subject to N5-methylglutamine.

The protein belongs to the universal ribosomal protein uL3 family. In terms of assembly, part of the 50S ribosomal subunit. Forms a cluster with proteins L14 and L19. In terms of processing, methylated by PrmB.

In terms of biological role, one of the primary rRNA binding proteins, it binds directly near the 3'-end of the 23S rRNA, where it nucleates assembly of the 50S subunit. The polypeptide is Large ribosomal subunit protein uL3 (rplC) (Aggregatibacter actinomycetemcomitans (Actinobacillus actinomycetemcomitans)).